The primary structure comprises 419 residues: Gamma-glutamyl phosphate reductase (419 aa).

Belongs to the gamma-glutamyl phosphate reductase family.

It is found in the cytoplasm. It catalyses the reaction L-glutamate 5-semialdehyde + phosphate + NADP(+) = L-glutamyl 5-phosphate + NADPH + H(+). The protein operates within amino-acid biosynthesis; L-proline biosynthesis; L-glutamate 5-semialdehyde from L-glutamate: step 2/2. Functionally, catalyzes the NADPH-dependent reduction of L-glutamate 5-phosphate into L-glutamate 5-semialdehyde and phosphate. The product spontaneously undergoes cyclization to form 1-pyrroline-5-carboxylate. In Caldicellulosiruptor saccharolyticus (strain ATCC 43494 / DSM 8903 / Tp8T 6331), this protein is Gamma-glutamyl phosphate reductase.